Consider the following 383-residue polypeptide: Succinyl-diaminopimelate desuccinylase (383 aa).

Position 79 (histidine 79) interacts with Zn(2+). Aspartate 81 is a catalytic residue. Aspartate 110 lines the Zn(2+) pocket. Residue glutamate 141 is the Proton acceptor of the active site. Glutamate 142, glutamate 170, and histidine 355 together coordinate Zn(2+).

It belongs to the peptidase M20A family. DapE subfamily. In terms of assembly, homodimer. It depends on Zn(2+) as a cofactor. Co(2+) serves as cofactor.

It carries out the reaction N-succinyl-(2S,6S)-2,6-diaminopimelate + H2O = (2S,6S)-2,6-diaminopimelate + succinate. The protein operates within amino-acid biosynthesis; L-lysine biosynthesis via DAP pathway; LL-2,6-diaminopimelate from (S)-tetrahydrodipicolinate (succinylase route): step 3/3. In terms of biological role, catalyzes the hydrolysis of N-succinyl-L,L-diaminopimelic acid (SDAP), forming succinate and LL-2,6-diaminopimelate (DAP), an intermediate involved in the bacterial biosynthesis of lysine and meso-diaminopimelic acid, an essential component of bacterial cell walls. In Helicobacter pylori (strain ATCC 700392 / 26695) (Campylobacter pylori), this protein is Succinyl-diaminopimelate desuccinylase.